The following is a 340-amino-acid chain: MAASEDELLLPRLPELFETSKKLLEDVEVATEPTGSRTIQDKVSKGLELLEKAAGMLSQLDLFSRNEDLEEIASTDLKYLMVPALQGALTMKQVNPSKRLDHLQRAREHFVHFLTQCHCYHVAEFQLPQTKTNSAENNTASSSMAYPNLVAMASQRQAKIERYKQKKEVEHRLSALKSAVESGQADDERVREYHLLHLRRWIAVSLEELESIDQEIKILKEKDSPREETACHSSLPEKPPMKPFILTRNKAQAKVFGTGYPSLATMTVSDWYEQHQKYGVLPDRGIAKPASADFQRAAQQQEDQEQKDEESEEKALHRMREWDDWKDTHPRGYGNRQNMG.

In terms of domain architecture, UIM spans 47-61 (LELLEKAAGMLSQLD). The tract at residues 99-203 (RLDHLQRARE…HLLHLRRWIA (105 aa)) is interaction with PPP2CA. Disordered stretches follow at residues 223-242 (DSPR…PPMK) and 291-340 (SADF…QNMG). Residues 226–291 (REETACHSSL…PDRGIAKPAS (66 aa)) form an interaction with MID1 region. Position 242 is an N6-acetyllysine (Lys242). Positions 292–301 (ADFQRAAQQQ) are enriched in low complexity. The segment covering 302–312 (EDQEQKDEESE) has biased composition (acidic residues). Residues 313-330 (EKALHRMREWDDWKDTHP) show a composition bias toward basic and acidic residues.

Belongs to the IGBP1/TAP42 family. In terms of assembly, interacts with PPP2CB, and with PP4 and PP6. Interacts with MID2. Interacts with ubiquitin. Interacts with partially folded PPP2CA, but not with the fully active protein. Interacts with MID1. In terms of processing, phosphorylated. Monoubiquitination by MID1 triggers calpain-mediated cleavage and switches IGBP1 activity from protective to destructive. In terms of tissue distribution, expressed in spleen, thymus, liver and brain. Ubiquitously expressed in B lineage cell lines.

It localises to the cytoplasm. In terms of biological role, associated to surface IgM-receptor; may be involved in signal transduction. Involved in regulation of the catalytic activity of the phosphatases PP2A, PP4 and PP6 by protecting their partially folded catalytic subunits from degradative polyubiquitination until they associate with regulatory subunits. The chain is Immunoglobulin-binding protein 1 (Igbp1) from Mus musculus (Mouse).